The following is a 663-amino-acid chain: Polyunsaturated fatty acid lipoxygenase ALOX12 (663 aa).

One can recognise a PLAT domain in the interval 2 to 114 (GRYRIRVATG…ILSLPEGTAR (113 aa)). Residues 115-663 (LPGDNALDMF…PSCIENSVTI (549 aa)) enclose the Lipoxygenase domain. The residue at position 246 (Ser246) is a Phosphoserine. His360, His365, His540, Asn544, and Ile663 together coordinate Fe cation.

Belongs to the lipoxygenase family. It depends on Fe cation as a cofactor. Expressed in vascular smooth muscle cells.

It localises to the cytoplasm. The protein localises to the cytosol. It is found in the membrane. It catalyses the reaction (5Z,8Z,11Z,14Z)-eicosatetraenoate + O2 = (12S)-hydroperoxy-(5Z,8Z,10E,14Z)-eicosatetraenoate. The enzyme catalyses (5Z,8Z,11Z,14Z)-eicosatetraenoate + O2 = (15S)-hydroperoxy-(5Z,8Z,11Z,13E)-eicosatetraenoate. It carries out the reaction 2 leukotriene A4 + O2 + 2 H2O = 2 lipoxin A4. The catalysed reaction is 2 leukotriene A4 + O2 + 2 H2O = 2 lipoxin B4. It catalyses the reaction (14S)-hydroperoxy-(4Z,7Z,10Z,12E,16Z,19Z)-docosahexaenoate = (13S,14S)-epoxy-(4Z,7Z,9E,11E,16Z,19Z)-docosahexaenoate + H2O. The enzyme catalyses N-(5Z,8Z,11Z,14Z)-eicosatetraenoyl-L-alanine + O2 = N-(15S)-hydroperoxy-(5Z,8Z,11Z,13E)-eicosatetraenoyl-alanine. It carries out the reaction N-(5Z,8Z,11Z,14Z)-eicosatetraenoyl-L-alanine + O2 = N-(12S)-hydroperoxy-(5Z,8Z,10E,14Z)-eicosatetraenoyl-alanine. The catalysed reaction is N-(5Z,8Z,11Z,14Z)-eicosatetraenoyl-gamma-aminobutanoate + O2 = N-(15S)-hydroperoxy-(5Z,8Z,11Z,13E)-eicosatetraenoyl-gamma-aminobutanoate. It catalyses the reaction N-(5Z,8Z,11Z,14Z)-eicosatetraenoyl-gamma-aminobutanoate + O2 = N-(12S)-hydroperoxy-(5Z,8Z,10E,14Z)-eicosatetraenoyl-gamma-aminobutanoate. The enzyme catalyses N-(5Z,8Z,11Z,14Z)-eicosatetraenoyl-glycine + O2 = N-(15S)-hydroperoxy-(5Z,8Z,11Z,13E)-eicosatetraenoyl-glycine. It carries out the reaction N-(5Z,8Z,11Z,14Z)-eicosatetraenoyl-glycine + O2 = N-(12S)-hydroperoxy-(5Z,8Z,10E,14Z)-eicosatetraenoyl-glycine. The catalysed reaction is N-(5Z,8Z,11Z,14Z)-eicosatetraenoyl-taurine + O2 = N-(12S)-hydroperoxy-(5Z,8Z,10E,14Z)-eicosatetraenoyl-taurine. It catalyses the reaction N-(5Z,8Z,11Z,14Z)-eicosatetraenoyl-taurine + O2 = N-(15S)-hydroperoxy-(5Z,8Z,11Z,13E)-eicosatetraenoyl-taurine. The enzyme catalyses (4Z,7Z,10Z,13Z,16Z,19Z)-docosahexaenoate + O2 = (14S)-hydroperoxy-(4Z,7Z,10Z,12E,16Z,19Z)-docosahexaenoate. It carries out the reaction (7S)-hydroperoxy-(4Z,8E,10Z,13Z,16Z,19Z)-docosahexaenoate + O2 = (7S,14S)-dihydroperoxy-(4Z,8E,10Z,12E,16Z,19Z)-docosahexaenoate. The catalysed reaction is (7S)-hydroperoxy-(4Z,8E,10Z,13Z,16Z,19Z)-docosahexaenoate + O2 = (7S,17S)-dihydroperoxy-(4Z,8E,10Z,13Z,15E,19Z)-docosahexaenoate. It catalyses the reaction (5Z,8Z,11Z,14Z,17Z)-eicosapentaenoate + O2 = (12S)-hydroperoxy-(5Z,8Z,10E,14Z,17Z)-eicosapentaenoate. The enzyme catalyses (8Z,11Z,14Z)-eicosatrienoate + O2 = (12S)-hydroperoxy-(8Z,10E,14Z)-eicosatrienoate. It carries out the reaction (9Z,12Z)-octadecadienoate + O2 = (13S)-hydroperoxy-(9Z,11E)-octadecadienoate. The catalysed reaction is (5Z,8Z,11Z)-eicosatrienoate + O2 = (12S)-hydroperoxy-(5Z,8Z,10E)-eicosatrienoate. It catalyses the reaction (14R,15S)-epoxy-(5Z,8Z,11Z)-eicosatrienoate + O2 = (12S)-hydroperoxy-(14R,15S)-epoxy-(5Z,8Z,10E)-eicosatrienoate. The enzyme catalyses (14S,15R)-epoxy-(5Z,8Z,11Z)-eicosatrienoate + O2 = (12S)-hydroperoxy-(14S,15R)-epoxy-(5Z,8Z,10E)-eicosatrienoate. Its pathway is lipid metabolism; hydroperoxy eicosatetraenoic acid biosynthesis. Its activity is regulated as follows. Activated by EGF. Arachidonic acid conversion is inhibited by (13S,14S)-epoxy-(4Z,7Z,9E,11E,16Z,19Z)-docosahexaenoate (13S,14S-epoxy-DHA). Arachidonate 12-lipoxygenase activity is decreased when PH decreases from 7.4 to 6. Functionally, catalyzes the regio and stereo-specific incorporation of molecular oxygen into free and esterified polyunsaturated fatty acids generating lipid hydroperoxides that can be further reduced to the corresponding hydroxy species. Mainly converts arachidonate ((5Z,8Z,11Z,14Z)-eicosatetraenoate) to the specific bioactive lipid (12S)-hydroperoxyeicosatetraenoate/(12S)-HPETE. Through the production of bioactive lipids like (12S)-HPETE it regulates different biological processes including platelet activation. It can also catalyze the epoxidation of double bonds of polyunsaturated fatty acids such as (14S)-hydroperoxy-docosahexaenoate/(14S)-HPDHA resulting in the formation of (13S,14S)-epoxy-DHA. Furthermore, it may participate in the sequential oxidations of DHA ((4Z,7Z,10Z,13Z,16Z,19Z)-docosahexaenoate) to generate specialized pro-resolving mediators (SPMs) like resolvin D5 ((7S,17S)-diHPDHA) and (7S,14S)-diHPDHA, that actively down-regulate the immune response and have anti-aggregation properties with platelets. An additional function involves a multistep process by which it transforms leukotriene A4/LTA4 into the bioactive lipids lipoxin A4/LXA4 and lipoxin B4/LXB4, both are vasoactive and LXA4 may regulate neutrophil function via occupancy of specific recognition sites. Can also peroxidize linoleate ((9Z,12Z)-octadecadienoate) to (13S)-hydroperoxyoctadecadienoate/ (13S-HPODE). Due to its role in regulating both the expression of the vascular endothelial growth factor (VEGF, an angiogenic factor involved in the survival and metastasis of solid tumors) and the expression of integrin beta-1 (known to affect tumor cell migration and proliferation), it can be regarded as protumorigenic. Important for cell survival, as it may play a role not only in proliferation but also in the prevention of apoptosis in vascular smooth muscle cells. The protein is Polyunsaturated fatty acid lipoxygenase ALOX12 of Homo sapiens (Human).